The chain runs to 149 residues: Large ribosomal subunit protein bL9 (149 aa).

It belongs to the bacterial ribosomal protein bL9 family.

In terms of biological role, binds to the 23S rRNA. The chain is Large ribosomal subunit protein bL9 from Helicobacter pylori (strain ATCC 700392 / 26695) (Campylobacter pylori).